The primary structure comprises 503 residues: CDK5 regulatory subunit-associated protein 3 (503 aa).

3 consecutive short sequence motifs (shuffled ATG8-binding motif) follow at residues I266–G269, I288–G291, and I306–G309. Residues W268–L503 are required for interaction with UFL1 and mediates interaction with CHEK1. Residues D352–E367 are RPL10a-binding domain (RBD). Residue K447 forms a Glycyl lysine isopeptide (Lys-Gly) (interchain with G-Cter in SUMO2) linkage.

Belongs to the CDK5RAP3 family. In terms of assembly, substrate adapter component of the UFM1 ribosome E3 ligase (UREL) complex, composed of UFL1, DDRGK1 and CDK5RAP3. Interaction with UFL1 anchors CDK5RAP3 in the cytoplasm, preventing its translocation to the nucleus which allows expression of the CCND1 cyclin and progression of cells through the G1/S transition. Interacts with ATG8 family proteins MAP1LC3A, MAP1LC3B, GABARAP, GABARAPL1 and GABARAPL2. Interacts with CDK5R1; competes with CDK5RAP1 and CDK5RAP2. Interacts with RELA. Interacts with CHEK1; may negatively regulate CHEK1 and thereby stimulate entry into mitosis. Interacts with CDKN2A/ARF and MDM2; forms a ternary complex involved in regulation of p53/TP53. Interacts with MAPK14. Interacts with CCNB1. Interacts with TUBG1; may regulate CDK5RAP3 in mitotic G2/M transition checkpoint. May be phosphorylated by CDK5. In terms of processing, ubiquitinated. Probably triggers proteasomal degradation and is negatively regulated by UFL1. Post-translationally, may be ufmylated. Cleaved by caspases early during apoptosis, the resulting peptides may play a role in rupture of the nuclear envelope. In terms of tissue distribution, widely expressed with higher expression in secretory tissues.

The protein resides in the endoplasmic reticulum membrane. It is found in the cytoplasm. The protein localises to the nucleus. It localises to the cytoskeleton. Its subcellular location is the microtubule organizing center. The protein resides in the centrosome. Its function is as follows. Substrate adapter of E3 ligase complexes mediating ufmylation, the covalent attachment of the ubiquitin-like modifier UFM1 to substrate proteins, and which is involved in various processes, such as ribosome recycling and reticulophagy (also called ER-phagy). As part of the UREL complex, plays a key role in ribosome recycling by promoting mono-ufmylation of RPL26/uL24 subunit of the 60S ribosome. Ufmylation of RPL26/uL24 occurs on free 60S ribosomes following ribosome dissociation: it weakens the junction between post-termination 60S subunits and SEC61 translocons, promoting release and recycling of the large ribosomal subunit from the endoplasmic reticulum membrane. Ufmylation of RPL26/uL24 and subsequent 60S ribosome recycling either take place after normal termination of translation or after ribosome stalling during cotranslational translocation at the endoplasmic reticulum. Within the UREL complex, CDK5RAP3 acts as a substrate adapter that constrains UFL1 ligase activity to mono-ufmylate RPL26/uL24 at 'Lys-134'. The UREL complex is also involved in reticulophagy in response to endoplasmic reticulum stress by promoting ufmylation of proteins such as CYB5R3, thereby promoting lysosomal degradation of ufmylated proteins. Also acts as a regulator of transcription: negatively regulates NF-kappa-B-mediated gene transcription through the control of RELA phosphorylation. Also regulates mitotic G2/M transition checkpoint and mitotic G2 DNA damage checkpoint. Through its interaction with CDKN2A/ARF and MDM2 may induce MDM2-dependent p53/TP53 ubiquitination, stabilization and activation in the nucleus, thereby promoting G1 cell cycle arrest and inhibition of cell proliferation. May also play a role in the rupture of the nuclear envelope during apoptosis. May regulate MAPK14 activity by regulating its dephosphorylation by PPM1D/WIP1. Required for liver development. The sequence is that of CDK5 regulatory subunit-associated protein 3 from Mus musculus (Mouse).